A 426-amino-acid chain; its full sequence is Gamma-glutamyl phosphate reductase (426 aa).

Belongs to the gamma-glutamyl phosphate reductase family.

It localises to the cytoplasm. The enzyme catalyses L-glutamate 5-semialdehyde + phosphate + NADP(+) = L-glutamyl 5-phosphate + NADPH + H(+). The protein operates within amino-acid biosynthesis; L-proline biosynthesis; L-glutamate 5-semialdehyde from L-glutamate: step 2/2. In terms of biological role, catalyzes the NADPH-dependent reduction of L-glutamate 5-phosphate into L-glutamate 5-semialdehyde and phosphate. The product spontaneously undergoes cyclization to form 1-pyrroline-5-carboxylate. The protein is Gamma-glutamyl phosphate reductase of Sorangium cellulosum (strain So ce56) (Polyangium cellulosum (strain So ce56)).